The sequence spans 29 residues: Cytochrome b6-f complex subunit 8 (29 aa).

Residues 3 to 23 (ILTLGWVSVLTLFTYSIAMVV) traverse the membrane as a helical segment.

Belongs to the PetN family. The 4 large subunits of the cytochrome b6-f complex are cytochrome b6, subunit IV (17 kDa polypeptide, PetD), cytochrome f and the Rieske protein, while the 4 small subunits are PetG, PetL, PetM and PetN. The complex functions as a dimer.

The protein localises to the cellular thylakoid membrane. Component of the cytochrome b6-f complex, which mediates electron transfer between photosystem II (PSII) and photosystem I (PSI), cyclic electron flow around PSI, and state transitions. The sequence is that of Cytochrome b6-f complex subunit 8 from Acaryochloris marina (strain MBIC 11017).